We begin with the raw amino-acid sequence, 392 residues long: MAAWRPPRVEELLAEARRAFMEEFGAEPELAVSAPGRVNLIGEHTDYNQGLVLPMALELVTVMVGSPRTDGLVSLLTTSKDADEPQRLQFPLPSAQWSLEPGIPQWANYVKGVIQHYPASPLVGFSAVVVSSVPLGGGLSSSASLEVATYTFIQQLCPDSGAIAARAQVCQRAEHSFAGVPCGIMDQLIALLGQKGYALLIDCRSLETSLVPLSDPKLAVLITNSNVRHSLGSSEYPVRRRQCEEVAQALGKESLREVRMEELEAGRELMSKEGFRRARHVVSEIRRTAQAAAAMSRGDYKAFGRLMVESHYSLRDDYEVSCPELDQLVEAALSVPGVYGSRMTGGGFGGCTVTLLEASVAPLVIDHIQEQYSGTATFYLSQAADGAQVLSL.

Positions 37, 43, 44, and 46 each coordinate alpha-D-galactose. ATP-binding residues include glycine 136, glycine 138, serine 140, and serine 141. Residue aspartate 186 coordinates alpha-D-galactose. Residue aspartate 186 is the Proton acceptor of the active site. Serine 230 is subject to Phosphoserine. Tyrosine 236 contributes to the alpha-D-galactose binding site.

Belongs to the GHMP kinase family. GalK subfamily. In terms of assembly, homodimer.

The enzyme catalyses alpha-D-galactose + ATP = alpha-D-galactose 1-phosphate + ADP + H(+). It functions in the pathway carbohydrate metabolism; galactose metabolism. Functionally, catalyzes the transfer of a phosphate from ATP to alpha-D-galactose and participates in the first committed step in the catabolism of galactose. In Mus musculus (Mouse), this protein is Galactokinase (Galk1).